The chain runs to 525 residues: Anti-silencing protein 2 (525 aa).

A disordered region spans residues 467 to 525; that stretch reads LPRVPTDSPQLPSKDKSQETAKKDDRPKLVANEPVTLDTSTPPVAQSLADSKHCSGLHK. Over residues 479–494 the composition is skewed to basic and acidic residues; that stretch reads SKDKSQETAKKDDRPK.

Functionally, derepression of silent mating type loci when overexpressed. The chain is Anti-silencing protein 2 (ASF2) from Saccharomyces cerevisiae (strain ATCC 204508 / S288c) (Baker's yeast).